The following is a 353-amino-acid chain: UDP-xylose transporter 2 (353 aa).

10 helical membrane-spanning segments follow: residues 7–27 (FQLG…SIVI), 31–51 (ALIS…HLLV), 75–95 (VLGF…SLGF), 100–120 (FYQM…TIFF), 132–152 (LVIL…LNML), 154–174 (SVLS…TNTI), 194–214 (AITL…QNVF), 224–244 (FFIV…FLVI), 250–270 (VTYQ…GYLL), and 280–300 (ILGI…CTLE). The tract at residues 308–353 (TSTQLPQMDENEKDPLVSAENGSGLISDNGVQKQDPVWNSNKDFQA) is disordered. The segment covering 327-353 (ENGSGLISDNGVQKQDPVWNSNKDFQA) has biased composition (polar residues). Residue S334 is modified to Phosphoserine.

This sequence belongs to the TPT transporter family. TPT (TC 2.A.7.9) subfamily. In terms of tissue distribution, ubiquitous.

It is found in the golgi apparatus membrane. Its function is as follows. Nucleotide-sugar transporter that transports UDP-xylose and UMP in a strict counter-exchange mode. The protein is UDP-xylose transporter 2 of Arabidopsis thaliana (Mouse-ear cress).